Reading from the N-terminus, the 216-residue chain is Probable nicotinate-nucleotide adenylyltransferase (216 aa).

This sequence belongs to the NadD family.

It catalyses the reaction nicotinate beta-D-ribonucleotide + ATP + H(+) = deamido-NAD(+) + diphosphate. It participates in cofactor biosynthesis; NAD(+) biosynthesis; deamido-NAD(+) from nicotinate D-ribonucleotide: step 1/1. Catalyzes the reversible adenylation of nicotinate mononucleotide (NaMN) to nicotinic acid adenine dinucleotide (NaAD). This is Probable nicotinate-nucleotide adenylyltransferase from Shewanella baltica (strain OS223).